The chain runs to 427 residues: Adenylosuccinate synthetase (427 aa).

Residues 12 to 18 (GDEGKGK) and 40 to 42 (GHT) contribute to the GTP site. Asp-13 (proton acceptor) is an active-site residue. Asp-13 and Gly-40 together coordinate Mg(2+). IMP is bound by residues 13-16 (DEGK), 38-41 (NAGH), Thr-127, Arg-141, Gln-222, Thr-237, and Arg-301. Residue His-41 is the Proton donor of the active site. 297–303 (VVTKRPR) contacts substrate. Residues Arg-303, 329–331 (SLD), and 411–413 (AVG) each bind GTP.

Belongs to the adenylosuccinate synthetase family. Homodimer. Mg(2+) is required as a cofactor.

The protein localises to the cytoplasm. It carries out the reaction IMP + L-aspartate + GTP = N(6)-(1,2-dicarboxyethyl)-AMP + GDP + phosphate + 2 H(+). Its pathway is purine metabolism; AMP biosynthesis via de novo pathway; AMP from IMP: step 1/2. Plays an important role in the de novo pathway of purine nucleotide biosynthesis. Catalyzes the first committed step in the biosynthesis of AMP from IMP. This Leuconostoc citreum (strain KM20) protein is Adenylosuccinate synthetase.